The following is a 353-amino-acid chain: MESPRGRPGPETDLLALGEQQAAIFGDGPGQTPSERPSDLRLSEDEEAENVGGASCHPKASLKTSSCSFVHPPEWEAPEDKPGRGGTFSGAGSRLGAPDPEFDLHGSSRRKDPEPPEAKPESERVCRRGSPVGGGMDVEQKEDDNEAAEAGRGGRSFSSRLQDSRSLDGLSGACGGPASSGGAESGAGGGRRATISSPLELEGTVSRHGDLTHFVANNLQLKIRLSGAPQPPPPAPTRPCSAPTPTPAIPPIDPDVLRDLERLSRELGGRVDRLLRGLGGAVQELTALSVGCIQTYRDAVDSLGEAVDMSIKGMYTLLARCEELERALQPVQGLARQVRDIRRTLEVLEALCK.

The disordered stretch occupies residues 23 to 194; that stretch reads AIFGDGPGQT…SGAGGGRRAT (172 aa). Basic and acidic residues predominate over residues 102–126; it reads FDLHGSSRRKDPEPPEAKPESERVC. 2 positions are modified to phosphoserine: Ser130 and Ser166. Positions 172–191 are enriched in gly residues; the sequence is GACGGPASSGGAESGAGGGR. Thr194 bears the Phosphothreonine mark. Ser197 carries the post-translational modification Phosphoserine. The tract at residues 225–253 is disordered; it reads LSGAPQPPPPAPTRPCSAPTPTPAIPPID. Residues 229–253 show a composition bias toward pro residues; it reads PQPPPPAPTRPCSAPTPTPAIPPID.

Belongs to the BORCS6 family. Component of the BLOC-one-related complex (BORC) which is composed of BLOC1S1, BLOC1S2, BORCS5, BORCS6, BORCS7, BORCS8, KXD1 and SNAPIN.

The protein resides in the lysosome membrane. Its function is as follows. As part of the BORC complex may play a role in lysosomes movement and localization at the cell periphery. Associated with the cytosolic face of lysosomes, the BORC complex may recruit ARL8B and couple lysosomes to microtubule plus-end-directed kinesin motor. The protein is BLOC-1-related complex subunit 6 of Bos taurus (Bovine).